Here is a 138-residue protein sequence, read N- to C-terminus: Transcription antitermination protein NusB (138 aa).

Belongs to the NusB family.

Involved in transcription antitermination. Required for transcription of ribosomal RNA (rRNA) genes. Binds specifically to the boxA antiterminator sequence of the ribosomal RNA (rrn) operons. This Coxiella burnetii (strain Dugway 5J108-111) protein is Transcription antitermination protein NusB.